We begin with the raw amino-acid sequence, 621 residues long: 1-deoxy-D-xylulose-5-phosphate synthase (621 aa).

Thiamine diphosphate-binding positions include His-80 and 121–123 (GHS). Asp-152 contributes to the Mg(2+) binding site. Thiamine diphosphate-binding positions include 153–154 (GA), Asn-181, Tyr-288, and Glu-371. Residue Asn-181 coordinates Mg(2+).

It belongs to the transketolase family. DXPS subfamily. Homodimer. It depends on Mg(2+) as a cofactor. The cofactor is thiamine diphosphate.

The enzyme catalyses D-glyceraldehyde 3-phosphate + pyruvate + H(+) = 1-deoxy-D-xylulose 5-phosphate + CO2. Its pathway is metabolic intermediate biosynthesis; 1-deoxy-D-xylulose 5-phosphate biosynthesis; 1-deoxy-D-xylulose 5-phosphate from D-glyceraldehyde 3-phosphate and pyruvate: step 1/1. In terms of biological role, catalyzes the acyloin condensation reaction between C atoms 2 and 3 of pyruvate and glyceraldehyde 3-phosphate to yield 1-deoxy-D-xylulose-5-phosphate (DXP). The polypeptide is 1-deoxy-D-xylulose-5-phosphate synthase (Pectobacterium atrosepticum (strain SCRI 1043 / ATCC BAA-672) (Erwinia carotovora subsp. atroseptica)).